The chain runs to 92 residues: Actobindin-A (92 aa).

2 disordered regions span residues 1–33 (MSAP…IGSD) and 54–92 (LKHA…AADS). WH2 domains follow at residues 3-20 (APNP…LKHT) and 40-57 (DHAS…LKHA). Composition is skewed to basic and acidic residues over residues 13-33 (KGAD…IGSD) and 54-64 (LKHAETDDKSA). The span at 68–79 (NENTTIKPNNHS) shows a compositional bias: polar residues.

As to quaternary structure, monomer.

Functionally, is able to bind two actin monomers at high concentrations of G-actin. Inhibits actin polymerization by sequestering G-actin and stabilizing actin dimers. This is Actobindin-A (abnA) from Dictyostelium discoideum (Social amoeba).